The chain runs to 182 residues: Large ribosomal subunit protein uL6 (182 aa).

The protein belongs to the universal ribosomal protein uL6 family. In terms of assembly, part of the 50S ribosomal subunit.

In terms of biological role, this protein binds to the 23S rRNA, and is important in its secondary structure. It is located near the subunit interface in the base of the L7/L12 stalk, and near the tRNA binding site of the peptidyltransferase center. The chain is Large ribosomal subunit protein uL6 from Aeropyrum pernix (strain ATCC 700893 / DSM 11879 / JCM 9820 / NBRC 100138 / K1).